A 438-amino-acid chain; its full sequence is Xylose isomerase (438 aa).

Residues histidine 100 and aspartate 103 contribute to the active site. The Mg(2+) site is built by glutamate 231, glutamate 267, histidine 270, aspartate 295, aspartate 306, aspartate 308, and aspartate 338.

Belongs to the xylose isomerase family. Homotetramer. Mg(2+) serves as cofactor.

It is found in the cytoplasm. The catalysed reaction is alpha-D-xylose = alpha-D-xylulofuranose. This Thermoanaerobacter pseudethanolicus (strain ATCC 33223 / 39E) (Clostridium thermohydrosulfuricum) protein is Xylose isomerase (xylA).